The following is a 199-amino-acid chain: Putative acetyltransferase SAV2555 (199 aa).

The protein belongs to the transferase hexapeptide repeat family.

The sequence is that of Putative acetyltransferase SAV2555 from Staphylococcus aureus (strain Mu50 / ATCC 700699).